The sequence spans 447 residues: Dual specificity protein phosphatase CDC14C (447 aa).

The tract at residues 14–168 (PQDDVYVDIT…AMQYGFLNFN (155 aa)) is a. The interval 169 to 182 (SFNLDEYEHYEKAE) is linker. The interval 183 to 349 (NGDLNWIIPD…EGDYFRQRLK (167 aa)) is b. A Tyrosine-protein phosphatase domain is found at 184–344 (GDLNWIIPDR…TSLWLEGDYF (161 aa)). The active-site Phosphocysteine intermediate is the Cys284. Residues 426 to 446 (FTLCSVVIWWIVCDYILPILL) form a helical membrane-spanning segment.

Belongs to the protein-tyrosine phosphatase family. Non-receptor class CDC14 subfamily.

The protein localises to the endoplasmic reticulum membrane. It carries out the reaction O-phospho-L-tyrosyl-[protein] + H2O = L-tyrosyl-[protein] + phosphate. It catalyses the reaction O-phospho-L-seryl-[protein] + H2O = L-seryl-[protein] + phosphate. The catalysed reaction is O-phospho-L-threonyl-[protein] + H2O = L-threonyl-[protein] + phosphate. Functionally, dual-specificity phosphatase. Preferentially dephosphorylates proteins modified by proline-directed kinases. The protein is Dual specificity protein phosphatase CDC14C of Homo sapiens (Human).